The primary structure comprises 61 residues: Small ribosomal subunit protein uS14 (61 aa).

4 residues coordinate Zn(2+): Cys-24, Cys-27, Cys-40, and Cys-43.

Belongs to the universal ribosomal protein uS14 family. Zinc-binding uS14 subfamily. As to quaternary structure, part of the 30S ribosomal subunit. Contacts proteins S3 and S10. Requires Zn(2+) as cofactor.

Binds 16S rRNA, required for the assembly of 30S particles and may also be responsible for determining the conformation of the 16S rRNA at the A site. This chain is Small ribosomal subunit protein uS14, found in Leptospira biflexa serovar Patoc (strain Patoc 1 / Ames).